Consider the following 380-residue polypeptide: E3 ubiquitin-protein ligase Iruka (380 aa).

The tract at residues 50-92 (APEMDSSTAGASGSARSGSSGSGSSGSHDTLSRGSSSSGSQVN) is disordered. Low complexity-rich tracts occupy residues 55-68 (SSTA…RSGS) and 74-89 (SGSH…SSGS). The RING-type; atypical zinc finger occupies 253–294 (CSICWDDFKIDETVRKLPCSHLYHENCIVPWLNLHSTCPICR). The disordered stretch occupies residues 317–367 (EMAADGSNSERRSASTATGTDNPSPANNPSQAAAEGGRTRPDANPAQAARN). A compositionally biased stretch (low complexity) spans 338–350 (NPSPANNPSQAAA).

As to quaternary structure, interacts (via N-terminus) with CG7546 (via Ubl domain).

It catalyses the reaction S-ubiquitinyl-[E2 ubiquitin-conjugating enzyme]-L-cysteine + [acceptor protein]-L-lysine = [E2 ubiquitin-conjugating enzyme]-L-cysteine + N(6)-ubiquitinyl-[acceptor protein]-L-lysine.. It participates in protein modification; protein ubiquitination. E3 ubiquitin-protein ligase that mediates E2-dependent, 'Lys-48'- and/or 'Lys-63'-linked polyubiquitination of substrates. Recognizes miRNA-empty Ago1 and triggers its degradation via polyubiquitination independently of the Bag6 complex. By targeting miRNA-empty Ago1, eliminates dysfunctional Ago1 not able to bind miRNA and thereby plays a role in the quality control of miRNA-mediated silencing. The chain is E3 ubiquitin-protein ligase Iruka from Drosophila melanogaster (Fruit fly).